Here is a 419-residue protein sequence, read N- to C-terminus: Dual specificity protein phosphatase 7 (419 aa).

The tract at residues methionine 1–isoleucine 41 is disordered. Positions serine 15 to glutamate 30 are enriched in low complexity. The span at proline 31–isoleucine 41 shows a compositional bias: gly residues. One can recognise a Rhodanese domain in the interval glycine 68–glutamate 187. The interval cysteine 216 to serine 240 is disordered. The span at serine 227–serine 240 shows a compositional bias: polar residues. In terms of domain architecture, Tyrosine-protein phosphatase spans phenylalanine 244–leucine 387. The Phosphocysteine intermediate role is filled by cysteine 331. Cysteine 331–arginine 337 lines the substrate pocket.

It belongs to the protein-tyrosine phosphatase family. Non-receptor class dual specificity subfamily. In terms of assembly, interacts with MAPK1/ERK2; the interaction enhances DUSP7 phosphatase activity.

It localises to the cytoplasm. It catalyses the reaction O-phospho-L-tyrosyl-[protein] + H2O = L-tyrosyl-[protein] + phosphate. The enzyme catalyses O-phospho-L-seryl-[protein] + H2O = L-seryl-[protein] + phosphate. It carries out the reaction O-phospho-L-threonyl-[protein] + H2O = L-threonyl-[protein] + phosphate. With respect to regulation, strongly inhibited by sodium orthovanadate. In terms of biological role, dual specificity protein phosphatase. Shows high activity towards MAPK1/ERK2. Also has lower activity towards MAPK14 and MAPK8. In arrested oocytes, plays a role in meiotic resumption. Promotes nuclear envelope breakdown and activation of the CDK1/Cyclin-B complex in oocytes, probably by dephosphorylating and inactivating the conventional protein kinase C (cPKC) isozyme PRKCB. May also inactivate PRKCA and/or PRKCG. Also important in oocytes for normal chromosome alignment on the metaphase plate and progression to anaphase, where it might regulate activity of the spindle-assembly checkpoint (SAC) complex. The protein is Dual specificity protein phosphatase 7 of Rattus norvegicus (Rat).